The following is an 82-amino-acid chain: ATP synthase subunit c (82 aa).

The next 2 helical transmembrane spans lie at 3-23 and 57-77; these read PLVA…ASLG and LAFM…LLFA.

Belongs to the ATPase C chain family. F-type ATPases have 2 components, F(1) - the catalytic core - and F(0) - the membrane proton channel. F(1) has five subunits: alpha(3), beta(3), gamma(1), delta(1), epsilon(1). F(0) has four main subunits: a(1), b(1), b'(1) and c(10-14). The alpha and beta chains form an alternating ring which encloses part of the gamma chain. F(1) is attached to F(0) by a central stalk formed by the gamma and epsilon chains, while a peripheral stalk is formed by the delta, b and b' chains.

It localises to the cellular thylakoid membrane. F(1)F(0) ATP synthase produces ATP from ADP in the presence of a proton or sodium gradient. F-type ATPases consist of two structural domains, F(1) containing the extramembraneous catalytic core and F(0) containing the membrane proton channel, linked together by a central stalk and a peripheral stalk. During catalysis, ATP synthesis in the catalytic domain of F(1) is coupled via a rotary mechanism of the central stalk subunits to proton translocation. Its function is as follows. Key component of the F(0) channel; it plays a direct role in translocation across the membrane. A homomeric c-ring of between 10-14 subunits forms the central stalk rotor element with the F(1) delta and epsilon subunits. This chain is ATP synthase subunit c, found in Synechococcus sp. (strain PCC 6716).